Consider the following 596-residue polypeptide: Probable ABC transporter ECU01_0200/ECU01_1410 (596 aa).

The next 3 membrane-spanning stretches (helical) occupy residues 26-46 (ALMA…VMSI), 173-193 (LVPI…MLRI), and 289-309 (LSVL…LGGI). Residues 39–318 (KWFDVMSIKR…IARDLGFWLT (280 aa)) form the ABC transmembrane type-1 domain. The 233-residue stretch at 361 to 593 (VEFDDVSFAY…RGMYWRMKTA (233 aa)) folds into the ABC transporter domain. ATP-binding positions include Y370 and 400–411 (GRPGSGKSTILR).

It belongs to the ABC transporter superfamily. ABCB family. Heavy Metal importer (TC 3.A.1.210) subfamily.

Its subcellular location is the membrane. This Encephalitozoon cuniculi (strain GB-M1) (Microsporidian parasite) protein is Probable ABC transporter ECU01_0200/ECU01_1410.